We begin with the raw amino-acid sequence, 98 residues long: Post-transcriptional regulator ComN (98 aa).

Interacts directly with DivIVA.

The protein resides in the cytoplasm. Required for post-transcription initiation control of the comE operon. Promotes the accumulation of its target comE mRNA to septal and polar sites. The protein is Post-transcriptional regulator ComN (comN) of Bacillus subtilis (strain 168).